The primary structure comprises 634 residues: 1,4-alpha-glucan branching enzyme GlgB (634 aa).

D305 serves as the catalytic Nucleophile. E357 functions as the Proton donor in the catalytic mechanism.

The protein belongs to the glycosyl hydrolase 13 family. GlgB subfamily. Monomer.

It carries out the reaction Transfers a segment of a (1-&gt;4)-alpha-D-glucan chain to a primary hydroxy group in a similar glucan chain.. The protein operates within glycan biosynthesis; glycogen biosynthesis. In terms of biological role, catalyzes the formation of the alpha-1,6-glucosidic linkages in glycogen by scission of a 1,4-alpha-linked oligosaccharide from growing alpha-1,4-glucan chains and the subsequent attachment of the oligosaccharide to the alpha-1,6 position. The chain is 1,4-alpha-glucan branching enzyme GlgB from Lactiplantibacillus plantarum (strain ATCC BAA-793 / NCIMB 8826 / WCFS1) (Lactobacillus plantarum).